The following is a 509-amino-acid chain: Maturase K (509 aa).

Belongs to the intron maturase 2 family. MatK subfamily.

It is found in the plastid. It localises to the chloroplast. Functionally, usually encoded in the trnK tRNA gene intron. Probably assists in splicing its own and other chloroplast group II introns. The protein is Maturase K of Trifolium semipilosum (Kenya clover).